The primary structure comprises 271 residues: Thiazole synthase (271 aa).

K104 functions as the Schiff-base intermediate with DXP in the catalytic mechanism. 1-deoxy-D-xylulose 5-phosphate is bound by residues G165, 192 to 193 (AG), and 214 to 215 (NT).

This sequence belongs to the ThiG family. As to quaternary structure, homotetramer. Forms heterodimers with either ThiH or ThiS.

It localises to the cytoplasm. It catalyses the reaction [ThiS sulfur-carrier protein]-C-terminal-Gly-aminoethanethioate + 2-iminoacetate + 1-deoxy-D-xylulose 5-phosphate = [ThiS sulfur-carrier protein]-C-terminal Gly-Gly + 2-[(2R,5Z)-2-carboxy-4-methylthiazol-5(2H)-ylidene]ethyl phosphate + 2 H2O + H(+). Its pathway is cofactor biosynthesis; thiamine diphosphate biosynthesis. Functionally, catalyzes the rearrangement of 1-deoxy-D-xylulose 5-phosphate (DXP) to produce the thiazole phosphate moiety of thiamine. Sulfur is provided by the thiocarboxylate moiety of the carrier protein ThiS. In vitro, sulfur can be provided by H(2)S. This chain is Thiazole synthase, found in Burkholderia lata (strain ATCC 17760 / DSM 23089 / LMG 22485 / NCIMB 9086 / R18194 / 383).